The chain runs to 82 residues: ATP synthase subunit c (82 aa).

A run of 2 helical transmembrane segments spans residues 5–25 (IASASVLAAALAIGLAAIGPG) and 57–77 (LAFMESLTIYGLVIALVLLFA).

The protein belongs to the ATPase C chain family. In terms of assembly, F-type ATPases have 2 components, F(1) - the catalytic core - and F(0) - the membrane proton channel. F(1) has five subunits: alpha(3), beta(3), gamma(1), delta(1), epsilon(1). F(0) has four main subunits: a(1), b(1), b'(1) and c(10-14). The alpha and beta chains form an alternating ring which encloses part of the gamma chain. F(1) is attached to F(0) by a central stalk formed by the gamma and epsilon chains, while a peripheral stalk is formed by the delta, b and b' chains.

The protein resides in the cellular thylakoid membrane. In terms of biological role, f(1)F(0) ATP synthase produces ATP from ADP in the presence of a proton or sodium gradient. F-type ATPases consist of two structural domains, F(1) containing the extramembraneous catalytic core and F(0) containing the membrane proton channel, linked together by a central stalk and a peripheral stalk. During catalysis, ATP synthesis in the catalytic domain of F(1) is coupled via a rotary mechanism of the central stalk subunits to proton translocation. Key component of the F(0) channel; it plays a direct role in translocation across the membrane. A homomeric c-ring of between 10-14 subunits forms the central stalk rotor element with the F(1) delta and epsilon subunits. The sequence is that of ATP synthase subunit c from Cyanothece sp. (strain PCC 7425 / ATCC 29141).